An 885-amino-acid polypeptide reads, in one-letter code: Protein transport protein SEC24-1 (885 aa).

Cysteine 164, cysteine 167, cysteine 186, and cysteine 189 together coordinate Zn(2+). Positions 164-189 (CRRCRSYLNPFVAFIEQGRRWQCNIC) are zinc finger-like. The tract at residues 296-332 (DDYEESDDDDDEDDDDEEEDNEEEEEEEEDEEDDDDS) is disordered.

It belongs to the SEC23/SEC24 family. SEC24 subfamily. As to quaternary structure, the COPII coat is composed of at least 5 proteins: the SEC23/24 complex, the SEC13/31 complex, and the protein SAR1. Golgi apparatus membrane; Peripheral membrane protein; Cytoplasmic side.

The protein resides in the cytoplasm. Its subcellular location is the cytoplasmic vesicle. The protein localises to the COPII-coated vesicle membrane. It localises to the endoplasmic reticulum membrane. It is found in the golgi apparatus membrane. Functionally, component of the coat protein complex II (COPII) which promotes the formation of transport vesicles from the endoplasmic reticulum (ER). The coat has two main functions, the physical deformation of the endoplasmic reticulum membrane into vesicles and the selection of cargo molecules. In Saccharomyces uvarum (strain ATCC 76518 / CBS 7001 / CLIB 283 / NBRC 10550 / MCYC 623 / NCYC 2669 / NRRL Y-11845) (Yeast), this protein is Protein transport protein SEC24-1 (SEC241).